The chain runs to 368 residues: 3-dehydroquinate synthase (368 aa).

Residues 71 to 76, 105 to 109, 129 to 130, lysine 142, lysine 151, and 169 to 172 contribute to the NAD(+) site; these read DGEAFK, GVVGD, TT, and TLRT. Zn(2+) contacts are provided by glutamate 184, histidine 247, and histidine 264.

This sequence belongs to the sugar phosphate cyclases superfamily. Dehydroquinate synthase family. Co(2+) serves as cofactor. The cofactor is Zn(2+). Requires NAD(+) as cofactor.

Its subcellular location is the cytoplasm. It carries out the reaction 7-phospho-2-dehydro-3-deoxy-D-arabino-heptonate = 3-dehydroquinate + phosphate. It participates in metabolic intermediate biosynthesis; chorismate biosynthesis; chorismate from D-erythrose 4-phosphate and phosphoenolpyruvate: step 2/7. Its function is as follows. Catalyzes the conversion of 3-deoxy-D-arabino-heptulosonate 7-phosphate (DAHP) to dehydroquinate (DHQ). The sequence is that of 3-dehydroquinate synthase from Cupriavidus pinatubonensis (strain JMP 134 / LMG 1197) (Cupriavidus necator (strain JMP 134)).